The following is an 84-amino-acid chain: Subtilisin-chymotrypsin inhibitor-2A (84 aa).

The tract at residues 1 to 23 is disordered; the sequence is MSSVEKKPEGVNTGAGDRHNLKT.

This sequence belongs to the protease inhibitor I13 (potato type I serine protease inhibitor) family.

Its function is as follows. Inhibits both subtilisin and chymotrypsin. This chain is Subtilisin-chymotrypsin inhibitor-2A, found in Hordeum vulgare (Barley).